The sequence spans 410 residues: Cytosolic isocitrate dehydrogenase [NADP] (410 aa).

NADP(+) is bound by residues 77 to 79 (TIT) and Arg-84. Thr-79 contributes to the substrate binding site. Substrate-binding positions include 96–102 (SPNGTIR), Arg-111, and Arg-134. Lys-260 contributes to the NADP(+) binding site. Positions 275 and 279 each coordinate Mn(2+). NADP(+) is bound by residues 310–315 (GTVTRH) and Asn-328.

Belongs to the isocitrate and isopropylmalate dehydrogenases family. Mg(2+) is required as a cofactor. The cofactor is Mn(2+).

It is found in the cytoplasm. It localises to the cytosol. It carries out the reaction D-threo-isocitrate + NADP(+) = 2-oxoglutarate + CO2 + NADPH. May supply 2-oxoglutarate for amino acid biosynthesis and ammonia assimilation via the glutamine synthetase/glutamate synthase (GS/GOGAT) pathway. May be involved in the production of NADPH to promote redox signaling or homeostasis in response to oxidative stress, or redox signaling linked to defense responses. This is Cytosolic isocitrate dehydrogenase [NADP] from Arabidopsis thaliana (Mouse-ear cress).